The following is a 366-amino-acid chain: S-adenosylmethionine:tRNA ribosyltransferase-isomerase (366 aa).

Belongs to the QueA family. As to quaternary structure, monomer.

It is found in the cytoplasm. It carries out the reaction 7-aminomethyl-7-carbaguanosine(34) in tRNA + S-adenosyl-L-methionine = epoxyqueuosine(34) in tRNA + adenine + L-methionine + 2 H(+). Its pathway is tRNA modification; tRNA-queuosine biosynthesis. Transfers and isomerizes the ribose moiety from AdoMet to the 7-aminomethyl group of 7-deazaguanine (preQ1-tRNA) to give epoxyqueuosine (oQ-tRNA). The sequence is that of S-adenosylmethionine:tRNA ribosyltransferase-isomerase from Caulobacter vibrioides (strain ATCC 19089 / CIP 103742 / CB 15) (Caulobacter crescentus).